The sequence spans 397 residues: Probable sugar efflux transporter (397 aa).

The next 12 helical transmembrane spans lie at V15 to L35, G51 to L71, L81 to F101, V103 to A123, A136 to V156, F170 to L190, P209 to Y229, F246 to G266, A273 to P293, L301 to V321, V333 to G353, and D364 to F384.

Belongs to the major facilitator superfamily. SotB (TC 2.A.1.2) family.

The protein localises to the cell inner membrane. Functionally, involved in the efflux of sugars. The physiological role may be the reduction of the intracellular concentration of toxic sugars or sugar metabolites. This chain is Probable sugar efflux transporter, found in Escherichia fergusonii (strain ATCC 35469 / DSM 13698 / CCUG 18766 / IAM 14443 / JCM 21226 / LMG 7866 / NBRC 102419 / NCTC 12128 / CDC 0568-73).